The primary structure comprises 383 residues: Succinyl-diaminopimelate desuccinylase (383 aa).

Histidine 72 contacts Zn(2+). The active site involves aspartate 74. Zn(2+) is bound at residue aspartate 105. The Proton acceptor role is filled by glutamate 139. Positions 140, 168, and 356 each coordinate Zn(2+).

Belongs to the peptidase M20A family. DapE subfamily. Homodimer. It depends on Zn(2+) as a cofactor. Co(2+) is required as a cofactor.

It carries out the reaction N-succinyl-(2S,6S)-2,6-diaminopimelate + H2O = (2S,6S)-2,6-diaminopimelate + succinate. It functions in the pathway amino-acid biosynthesis; L-lysine biosynthesis via DAP pathway; LL-2,6-diaminopimelate from (S)-tetrahydrodipicolinate (succinylase route): step 3/3. Catalyzes the hydrolysis of N-succinyl-L,L-diaminopimelic acid (SDAP), forming succinate and LL-2,6-diaminopimelate (DAP), an intermediate involved in the bacterial biosynthesis of lysine and meso-diaminopimelic acid, an essential component of bacterial cell walls. This chain is Succinyl-diaminopimelate desuccinylase, found in Beijerinckia indica subsp. indica (strain ATCC 9039 / DSM 1715 / NCIMB 8712).